The primary structure comprises 131 residues: Small ribosomal subunit protein uS8 (131 aa).

It belongs to the universal ribosomal protein uS8 family. As to quaternary structure, part of the 30S ribosomal subunit. Contacts proteins S5 and S12.

Its function is as follows. One of the primary rRNA binding proteins, it binds directly to 16S rRNA central domain where it helps coordinate assembly of the platform of the 30S subunit. The chain is Small ribosomal subunit protein uS8 from Polaromonas naphthalenivorans (strain CJ2).